A 358-amino-acid chain; its full sequence is Carbohydrate sulfotransferase 10 (358 aa).

The Cytoplasmic segment spans residues 1–6 (MHHQWL). The helical; Signal-anchor for type II membrane protein transmembrane segment at 7–27 (LLAACFWVIFMFMVASKFITL) threads the bilayer. Topologically, residues 28-358 (TFKDPDGYGA…GYRVPDFLLN (331 aa)) are lumenal. An N-linked (GlcNAc...) asparagine glycan is attached at N101. 3'-phosphoadenylyl sulfate-binding positions include 129–135 (PKVGNTQ) and 191–199 (RDPFERLIS). The N-linked (GlcNAc...) asparagine glycan is linked to N318.

This sequence belongs to the sulfotransferase 2 family. In terms of tissue distribution, predominantly expressed in hypertrophic, prehypertrophic and proliferative chondrocytes at E12 but is down-regulated in epiphyseal chondrocytes.

Its subcellular location is the golgi apparatus membrane. Functionally, catalyzes the transfer of sulfate to position 3 of terminal glucuronic acid of both protein- and lipid-linked oligosaccharides. Participates in biosynthesis of HNK-1 carbohydrate structure, a sulfated glucuronyl-lactosaminyl residue carried by many neural recognition molecules, which is involved in cell interactions during ontogenetic development and in synaptic plasticity in the adult. The polypeptide is Carbohydrate sulfotransferase 10 (CHST10) (Gallus gallus (Chicken)).